We begin with the raw amino-acid sequence, 250 residues long: Probable transcriptional regulatory protein Mkms_2298 (250 aa).

Belongs to the TACO1 family.

The protein localises to the cytoplasm. This is Probable transcriptional regulatory protein Mkms_2298 from Mycobacterium sp. (strain KMS).